The following is a 183-amino-acid chain: Putative manganese efflux pump MntP (183 aa).

6 consecutive transmembrane segments (helical) span residues 8–28 (IIAL…VALG), 40–60 (FYIG…GMAV), 72–92 (ATYA…IASF), 108–128 (LFFA…LGIF), 133–153 (MVTI…GLFV), and 163–183 (SYSE…LLFL).

It belongs to the MntP (TC 9.B.29) family.

It is found in the cell membrane. Probably functions as a manganese efflux pump. The polypeptide is Putative manganese efflux pump MntP (Geobacillus kaustophilus (strain HTA426)).